We begin with the raw amino-acid sequence, 128 residues long: KVYDRCEFARILKKSGMDGYRGVSLANWVCLAKWESDFNTKAINRNVGSTDYGIFQINSRYWCNDGKTPKAVNACHISCKVLLDDDLSQDIECAKRVVRDPQGIKAWVAWRTHCQNKDVSQYIRGCKL.

In terms of domain architecture, C-type lysozyme spans 1-128; it reads KVYDRCEFAR…VSQYIRGCKL (128 aa). Intrachain disulfides connect Cys-6-Cys-126, Cys-30-Cys-114, Cys-63-Cys-79, and Cys-75-Cys-93. Residues Glu-35 and Asp-51 contribute to the active site.

It belongs to the glycosyl hydrolase 22 family. In terms of assembly, monomer.

It localises to the secreted. It catalyses the reaction Hydrolysis of (1-&gt;4)-beta-linkages between N-acetylmuramic acid and N-acetyl-D-glucosamine residues in a peptidoglycan and between N-acetyl-D-glucosamine residues in chitodextrins.. In terms of biological role, lysozymes have primarily a bacteriolytic function; those in tissues and body fluids are associated with the monocyte-macrophage system and enhance the activity of immunoagents. This is Lysozyme C-1 from Sus scrofa (Pig).